Reading from the N-terminus, the 204-residue chain is GATA transcription factor 14 (204 aa).

Over residues 57–66 (REFDTNDSKP) the composition is skewed to basic and acidic residues. The segment at 57–102 (REFDTNDSKPSRNFSNLPTATRGRLHAPKRSGNKRGRQKRLSFKSP) is disordered. Positions 79-98 (GRLHAPKRSGNKRGRQKRLS) are enriched in basic residues. A GATA-type zinc finger spans residues 111-165 (GITDKSCSHCGTRKTPLWREGPRGAGTLCNACGMRYRTGRLLPEYRPASSPDFKP). The disordered stretch occupies residues 180–204 (RERKSSPPNSFGFSESYHSTRKLGF). A compositionally biased stretch (polar residues) spans 185-196 (SPPNSFGFSESY).

The protein belongs to the type IV zinc-finger family. Class A subfamily.

It localises to the nucleus. Its function is as follows. Transcriptional activator that specifically binds 5'-GATA-3' or 5'-GAT-3' motifs within gene promoters. May be involved in the regulation of some light-responsive genes. The protein is GATA transcription factor 14 (GATA14) of Arabidopsis thaliana (Mouse-ear cress).